Consider the following 562-residue polypeptide: Sperm-tail PG-rich repeat-containing protein 2 (562 aa).

3 STPGR repeats span residues glycine 21 to leucine 31, serine 60 to asparagine 73, and proline 96 to proline 118. Disordered regions lie at residues lysine 114 to isoleucine 136 and serine 192 to glutamine 215. The segment covering proline 127–isoleucine 136 has biased composition (low complexity). The segment covering glycine 193–aspartate 202 has biased composition (basic and acidic residues). 6 STPGR repeats span residues proline 204–glutamate 227, proline 253–histidine 271, threonine 336–alanine 350, threonine 385–phenylalanine 409, threonine 425–leucine 462, and threonine 478–serine 492. Positions serine 543–alanine 562 are disordered. The span at arginine 551–alanine 562 shows a compositional bias: basic residues.

The protein is Sperm-tail PG-rich repeat-containing protein 2 (stpg2) of Danio rerio (Zebrafish).